The primary structure comprises 1479 residues: MIERGKFRSLTLVNWNGFFARTFDLDELVTTLSGGNGAGKSTTMAAFVTALIPDLTLLHFRNTTEAGATSGSRDKGLHGKLRAGVCYSVLDVINSRHQRVVVGVRLQQVAGRDRKVDIKPFAIQGLPTSILPTQLLTETLNDRQARVVSLNELKDKLEAMEGVQFKQFNSITEYHSLMFDLGVVARRLRSASDRSKYYRLIEASLYGGISSTITRSLRDYLLPENSGVRKAFQDMEAALRENRMTLEAIRVTQSDRDLFKHLISEATNYVAADYMRHANERRIHLDKALEYRRDLFTSRSQLAAEQYKHVDMARELQEHNGAEGDLEADYQAASDHLNLVQTALRQQEKIERYEADLDELQIRLEEQNEVVAEAVDRQEENEARAEAAELEVDELKSQLADYQQALDVQQTRAIQYNQALQRWSAKALCHLPDLTPESADEWLETFQAKEQEATEKMLSLEQKMSVANRAHSQFEQAYQLVAAINGPWRANEAWDVAREFVRDGVNQRHQAEQAQGVRSRLNELEQRLREQQDAERQLAEFCKRQGKRYDIDDLETLHQELEARIASLADSVSNAQEQRMALRQELEQLQSRTQTLMRRAPVWLAAQNSLNQLCEQSGEQFASGQEVTEYLQQLLEREREAIVERDEVGRRKRAIDEEIERLSQPGGSEDPRLNALAERFGGVLLSEIYDDVSLDDAPYFSALYGPSRHAIVVPDLSRVAEQLEGLEDCPEDLYLIEGDPQSFDDSVFSVDELEKAVVVKIADIQWRYSRFPALPLFGRAARENRIETLHAERESLSERFGTLSFDVQKTQRLHQAFSRFIEQHLAVTFEDDPEEEIRKLKQARGELERTVSAHESDNQQNRVQYEQAKEGVTALNRILPRLNLLADDTLADRVDEIQERLDETQEARFIQQYGNELAKLEPIFRCCRANPEQFEQLKEDYAYAQQTQRDARQQAFALAEVVQRRAHFSYSDSAEMLSGNSDLNEKLRQRLEQAESERSRARDAMRAHAAQLSQYNQVLASLKSSYDTKKELLNDLYKELQDIGVRADAGKKRARARRHELHMQLSNNRSRRNQLEKALTFCEAEMDNLTRKLRKLERDYCEMREQVVTAKAGWCAVMRLVKDNGVERRLHRRELAYLSADELRSMSDKALGALRLAVADNEHLRDVLRISEDPKRPERKIQFFVAVYQHLRERIRQDIIRTDDPVEAIEQMEIELSRLTEELTNREQKLAISSRSVANIIRKTIQREQNRIRMLNQGLQSVSFGQVNSVRLNVNVRETHSMLLDVLSEQHEQHQDLFNSNRLTFSEALAKLYQRLNPQIDMGQRTPQTIGEELLDYRNYLEMEVEVNRGSDGWLRAESGALSTGEAIGTGMSILVMVVQSWEDESRRLRGKDISPCRLLFLDEAARLDARSIATLFELCERLEMQLIIAAPENISPEKGTTYKLVRKVFNNHEHVHVVGLRGFDAPLPEALPGTADAS.

34–41 (GGNGAGKS) lines the ATP pocket. Coiled coils occupy residues 138–163 (ETLN…MEGV) and 331–664 (QAAS…RLSQ). The flexible hinge stretch occupies residues 665-782 (PGGSEDPRLN…ALPLFGRAAR (118 aa)). Coiled-coil stretches lie at residues 831-1112 (DDPE…TAKA) and 1206-1257 (VEAI…MLNQ).

This sequence belongs to the SMC family. MukB subfamily. Homodimerization via its hinge domain. Binds to DNA via its C-terminal region. Interacts, and probably forms a ternary complex, with MukE and MukF via its C-terminal region. The complex formation is stimulated by calcium or magnesium. Interacts with tubulin-related protein FtsZ.

It localises to the cytoplasm. It is found in the nucleoid. Its function is as follows. Plays a central role in chromosome condensation, segregation and cell cycle progression. Functions as a homodimer, which is essential for chromosome partition. Involved in negative DNA supercoiling in vivo, and by this means organize and compact chromosomes. May achieve or facilitate chromosome segregation by condensation DNA from both sides of a centrally located replisome during cell division. This is Chromosome partition protein MukB from Klebsiella pneumoniae.